Consider the following 319-residue polypeptide: Ester hydrolase C11orf54 homolog (319 aa).

Zn(2+) contacts are provided by His-270, His-272, and His-282.

Monomer. It depends on Zn(2+) as a cofactor.

It localises to the nucleus. Its subcellular location is the cytoplasm. Functionally, exhibits ester hydrolase activity on the substrate p-nitrophenyl acetate, in vitro. May regulate DNA damage and repair by regulating HIF1A degradation via chaperone-mediated autophagy (CMA). This chain is Ester hydrolase C11orf54 homolog, found in Danio rerio (Zebrafish).